Consider the following 526-residue polypeptide: Probable polyol transporter 4 (526 aa).

2 disordered regions span residues 1–21 (MMKNLPEVGNGGGSGFPAVSV) and 28–47 (YQRMDSDAEESQNHREAEAR). Basic and acidic residues predominate over residues 29–47 (QRMDSDAEESQNHREAEAR). 12 helical membrane-spanning segments follow: residues 63–83 (SLNNVLLGYDVGVMSGAVLFI), 92–112 (VQTEVLIGSLSIISLFGSLAG), 125–145 (MALAALVFQTGAAVMAVAPSF), 153–173 (TLAGIGIGLGVMIAPVYIAEI), 180–200 (GFFTSFPEIFINLGILLGYVS), 215–235 (IMLAVGILPSVFIGFALCVIP), 300–320 (MLIVGFGIQCFQQITGIDATV), 340–360 (AATVAVGVTKTVFILFATFLI), 371–391 (VSTIGMTLCLFCLSFTLTFLG), 395–415 (LGITLALLFVCGNVAFFSIGM), 437–457 (ALGAVGNRVCSGLVAMSFLSV), and 465–485 (GTFFVFSLVSALSVIFVYVLV).

Belongs to the major facilitator superfamily. Sugar transporter (TC 2.A.1.1) family.

It is found in the membrane. In terms of biological role, plasma membrane sugar-proton symporter. The chain is Probable polyol transporter 4 (PLT4) from Arabidopsis thaliana (Mouse-ear cress).